A 35-amino-acid polypeptide reads, in one-letter code: Alpha-amanitin proprotein 2 (35 aa).

A propeptide spanning residues 1–10 is cleaved from the precursor; sequence MFDTNSTRLP. Ile11 carries the (3R,4R)-4,5-dihydroxyisoleucine; in form alpha-amanitin modification. A (3R,4S)-4-hydroxyisoleucine; in form gamma-amanitin modification is found at Ile11. Residues 11-18 constitute a cross-link (cyclopeptide (Ile-Pro)); the sequence is IWGIGCNP. Residues 12-16 constitute a cross-link (2'-cysteinyl-6'-hydroxytryptophan sulfoxide (Trp-Cys)); that stretch reads WGIGC. The residue at position 18 (Pro18) is a 4-hydroxyproline. Residues 19 to 35 constitute a propeptide that is removed on maturation; the sequence is WTAEHVDQTLVSGNDIC.

Belongs to the MSDIN fungal toxin family. Post-translationally, processed by the macrocyclase-peptidase enzyme POPB to yield a toxic bicyclic octapeptide. POPB first removes 10 residues from the N-terminus. Conformational trapping of the remaining peptide forces the enzyme to release this intermediate rather than proceed to macrocyclization. The enzyme rebinds the remaining peptide in a different conformation and catalyzes macrocyclization of the N-terminal 8 residues.

Functionally, major toxin belonging to the bicyclic octapeptides amatoxins that acts by binding non-competitively to RNA polymerase II and greatly slowing the elongation of transcripts from target promoters. The sequence is that of Alpha-amanitin proprotein 2 from Galerina marginata (strain CBS 339.88).